The following is a 229-amino-acid chain: ATP synthase subunit a (229 aa).

6 helical membrane passes run Ala25–Ala45, Phe82–Val102, Gly104–Val124, Phe142–Leu162, Leu181–Met201, and Gly202–Gln222.

It belongs to the ATPase A chain family. In terms of assembly, F-type ATPases have 2 components, CF(1) - the catalytic core - and CF(0) - the membrane proton channel. CF(1) has five subunits: alpha(3), beta(3), gamma(1), delta(1), epsilon(1). CF(0) has three main subunits: a(1), b(2) and c(9-12). The alpha and beta chains form an alternating ring which encloses part of the gamma chain. CF(1) is attached to CF(0) by a central stalk formed by the gamma and epsilon chains, while a peripheral stalk is formed by the delta and b chains.

The protein resides in the cell inner membrane. Key component of the proton channel; it plays a direct role in the translocation of protons across the membrane. In Citrifermentans bemidjiense (strain ATCC BAA-1014 / DSM 16622 / JCM 12645 / Bem) (Geobacter bemidjiensis), this protein is ATP synthase subunit a.